Consider the following 522-residue polypeptide: Probable cytochrome P450 12e1, mitochondrial (522 aa).

Cys468 serves as a coordination point for heme.

It belongs to the cytochrome P450 family. Requires heme as cofactor.

It is found in the mitochondrion membrane. This chain is Probable cytochrome P450 12e1, mitochondrial (Cyp12e1), found in Drosophila melanogaster (Fruit fly).